The sequence spans 273 residues: Dermonecrotic toxin LhSicTox-alphaIA2av (273 aa).

Residue histidine 5 is part of the active site. Glutamate 25 and aspartate 27 together coordinate Mg(2+). The Nucleophile role is filled by histidine 41. 2 cysteine pairs are disulfide-bonded: cysteine 45-cysteine 51 and cysteine 47-cysteine 190. Aspartate 85 contacts Mg(2+).

Belongs to the arthropod phospholipase D family. Class II subfamily. Requires Mg(2+) as cofactor. In terms of tissue distribution, expressed by the venom gland.

It is found in the secreted. The enzyme catalyses an N-(acyl)-sphingosylphosphocholine = an N-(acyl)-sphingosyl-1,3-cyclic phosphate + choline. It catalyses the reaction an N-(acyl)-sphingosylphosphoethanolamine = an N-(acyl)-sphingosyl-1,3-cyclic phosphate + ethanolamine. The catalysed reaction is a 1-acyl-sn-glycero-3-phosphocholine = a 1-acyl-sn-glycero-2,3-cyclic phosphate + choline. It carries out the reaction a 1-acyl-sn-glycero-3-phosphoethanolamine = a 1-acyl-sn-glycero-2,3-cyclic phosphate + ethanolamine. Its function is as follows. Dermonecrotic toxins cleave the phosphodiester linkage between the phosphate and headgroup of certain phospholipids (sphingolipid and lysolipid substrates), forming an alcohol (often choline) and a cyclic phosphate. This toxin acts on sphingomyelin (SM). It may also act on ceramide phosphoethanolamine (CPE), lysophosphatidylcholine (LPC) and lysophosphatidylethanolamine (LPE), but not on lysophosphatidylserine (LPS), and lysophosphatidylglycerol (LPG). It acts by transphosphatidylation, releasing exclusively cyclic phosphate products as second products. Induces dermonecrosis, hemolysis, increased vascular permeability, edema, inflammatory response, and platelet aggregation. In Loxosceles hirsuta (Recluse spider), this protein is Dermonecrotic toxin LhSicTox-alphaIA2av.